A 321-amino-acid polypeptide reads, in one-letter code: Tetraacyldisaccharide 4'-kinase (321 aa).

Residue 54 to 61 (SVGGTGKT) participates in ATP binding.

This sequence belongs to the LpxK family.

It carries out the reaction a lipid A disaccharide + ATP = a lipid IVA + ADP + H(+). It functions in the pathway glycolipid biosynthesis; lipid IV(A) biosynthesis; lipid IV(A) from (3R)-3-hydroxytetradecanoyl-[acyl-carrier-protein] and UDP-N-acetyl-alpha-D-glucosamine: step 6/6. Its function is as follows. Transfers the gamma-phosphate of ATP to the 4'-position of a tetraacyldisaccharide 1-phosphate intermediate (termed DS-1-P) to form tetraacyldisaccharide 1,4'-bis-phosphate (lipid IVA). This chain is Tetraacyldisaccharide 4'-kinase, found in Rickettsia peacockii (strain Rustic).